The primary structure comprises 505 residues: Calcium/calmodulin-dependent protein kinase kinase 1 (505 aa).

The interval 27–66 is disordered; sequence HLEEAEEGPEPASNGVDPPPRARAASVIPGSASRPTPVRP. Phosphoserine is present on residues serine 67 and serine 74. Residue arginine 78 is modified to Asymmetric dimethylarginine. Serine 100 bears the Phosphoserine mark. A Phosphothreonine modification is found at threonine 108. The 282-residue stretch at 128–409 folds into the Protein kinase domain; it reads YKLQSEIGKG…VSDIKLHPWV (282 aa). ATP contacts are provided by residues 134–142 and lysine 157; that span reads IGKGAYGVV. The tract at residues 167 to 189 is RP domain; that stretch reads QYGFPRRPPPRGSQAPQGGPAKQ. Aspartate 275 (proton acceptor) is an active-site residue. Residues 435-440 are autoinhibitory domain; the sequence is KNSVKL. Residues 438–463 are calmodulin-binding; the sequence is VKLIPSWTTVILVKSMLRKRSFGNPF. Phosphoserine occurs at positions 458, 475, and 492. The segment at 460-505 is disordered; that stretch reads GNPFEPQARREERSMSAPGNLLLKEGCGEGGKSPELPGVQEDEAAS.

This sequence belongs to the protein kinase superfamily. Ser/Thr protein kinase family. As to quaternary structure, interacts with CAMK4 and calmodulin. In terms of processing, appears to be autophosphorylated. Phosphorylated at multiple sites by PRCAKA/PKA. Phosphorylation of Ser-458 is blocked upon binding to Ca(2+)/calmodulin. May be phosphorylated by CAMK1 and CAMK4. As to expression, mostly expressed in the brain with higher levels in cortex and hippocampus. Lower expression levels were detected in striatum, nucleus accumbens and cerebellum (at protein level). Abundant in forebrain, weaker in cerebellum and also detected in thymus and spleen.

The protein localises to the cytoplasm. Its subcellular location is the nucleus. The catalysed reaction is L-seryl-[protein] + ATP = O-phospho-L-seryl-[protein] + ADP + H(+). The enzyme catalyses L-threonyl-[protein] + ATP = O-phospho-L-threonyl-[protein] + ADP + H(+). Activated by Ca(2+)/calmodulin. Binding of calmodulin may relieve intrasteric autoinhibition. Partially inhibited upon phosphorylation by PRCAKA/PKA. May be regulated through phosphorylation by CAMK1 and CAMK4. Calcium/calmodulin-dependent protein kinase that belongs to a proposed calcium-triggered signaling cascade involved in a number of cellular processes. Phosphorylates CAMK1, CAMK1D, CAMK1G and CAMK4. Involved in regulating cell apoptosis. Promotes cell survival by phosphorylating AKT1/PKB that inhibits pro-apoptotic BAD/Bcl2-antagonist of cell death. This chain is Calcium/calmodulin-dependent protein kinase kinase 1 (Camkk1), found in Rattus norvegicus (Rat).